Reading from the N-terminus, the 82-residue chain is ATP synthase subunit c, chloroplastic (82 aa).

The next 2 membrane-spanning stretches (helical) occupy residues 7–27 (AASV…PGIG) and 57–77 (LAFM…LLFA).

Belongs to the ATPase C chain family. In terms of assembly, F-type ATPases have 2 components, F(1) - the catalytic core - and F(0) - the membrane proton channel. F(1) has five subunits: alpha(3), beta(3), gamma(1), delta(1), epsilon(1). F(0) has four main subunits: a(1), b(1), b'(1) and c(10-14). The alpha and beta chains form an alternating ring which encloses part of the gamma chain. F(1) is attached to F(0) by a central stalk formed by the gamma and epsilon chains, while a peripheral stalk is formed by the delta, b and b' chains.

Its subcellular location is the plastid. It is found in the chloroplast thylakoid membrane. Functionally, f(1)F(0) ATP synthase produces ATP from ADP in the presence of a proton or sodium gradient. F-type ATPases consist of two structural domains, F(1) containing the extramembraneous catalytic core and F(0) containing the membrane proton channel, linked together by a central stalk and a peripheral stalk. During catalysis, ATP synthesis in the catalytic domain of F(1) is coupled via a rotary mechanism of the central stalk subunits to proton translocation. Its function is as follows. Key component of the F(0) channel; it plays a direct role in translocation across the membrane. A homomeric c-ring of between 10-14 subunits forms the central stalk rotor element with the F(1) delta and epsilon subunits. The chain is ATP synthase subunit c, chloroplastic from Rhodomonas salina (Cryptomonas salina).